The chain runs to 92 residues: MPRSLKKGPFIDLHLLKKVEKAVESGDKKPVKTWSRRSMIIPTMINLTIAVHNGRQHVPVFVTEDMIGHKLGEFAPTRTYRGHAADKKAKKR.

It belongs to the universal ribosomal protein uS19 family.

Its function is as follows. Protein S19 forms a complex with S13 that binds strongly to the 16S ribosomal RNA. The chain is Small ribosomal subunit protein uS19 from Aliivibrio fischeri (strain ATCC 700601 / ES114) (Vibrio fischeri).